We begin with the raw amino-acid sequence, 305 residues long: Oligopeptide transport system permease protein OppC (305 aa).

The next 6 membrane-spanning stretches (helical) occupy residues 43–63, 105–125, 166–185, 212–232, 236–256, and 274–294; these read AMVG…APMF, ISIF…VIWG, LFTI…ARIV, LFKH…TLTV, IFTE…LASW, and LFFP…VGDG. The region spanning 103-292 is the ABC transmembrane type-1 domain; it reads ARISIFIGVA…ITMFGFNVVG (190 aa).

The protein belongs to the binding-protein-dependent transport system permease family. OppBC subfamily. In terms of assembly, the complex is composed of two ATP-binding proteins (OppD and OppF), two transmembrane proteins (OppB and OppC) and a solute-binding protein (OppA).

It localises to the cell membrane. In terms of biological role, part of the ABC transporter complex OppABCDF involved in the uptake of oligopeptides. Probably responsible for the translocation of the substrate across the membrane. Required for sporulation and genetic competence. The sequence is that of Oligopeptide transport system permease protein OppC from Bacillus subtilis (strain 168).